The following is a 381-amino-acid chain: Zinc finger CCCH domain-containing protein 61 (381 aa).

A disordered region spans residues 1 to 39 (MDVEHHKSGHISRPTVDIPPRKLLSSAKSPSSVSSPLRD). Over residues 21–37 (RKLLSSAKSPSSVSSPL) the composition is skewed to low complexity. 2 consecutive C3H1-type zinc fingers follow at residues 101–128 (YTGE…HGVF) and 137–159 (YRTE…AHSP).

In terms of assembly, interacts with MARD1/FLZ9 and RD21A via its CCCH zing finger domains.

It localises to the cytoplasm. The protein localises to the stress granule. The protein resides in the P-body. This is Zinc finger CCCH domain-containing protein 61 from Arabidopsis thaliana (Mouse-ear cress).